Here is a 1072-residue protein sequence, read N- to C-terminus: Dyslexia-associated protein KIAA0319 (1072 aa).

The N-terminal stretch at methionine 1–cysteine 20 is a signal peptide. In terms of domain architecture, MANSC spans alanine 21–tyrosine 99. The Extracellular segment spans residues alanine 21 to serine 955. Disordered regions lie at residues leucine 168–proline 277 and valine 295–threonine 327. Asparagine 196, asparagine 219, and asparagine 262 each carry an N-linked (GlcNAc...) asparagine glycan. Polar residues predominate over residues serine 254 to glycine 265. A compositionally biased stretch (low complexity) spans alanine 311–glutamate 320. PKD domains are found at residues aspartate 341–alanine 427, valine 435–alanine 524, valine 530–glutamate 620, asparagine 621–glutamate 714, and arginine 720–aspartate 811. N-linked (GlcNAc...) asparagine glycosylation is found at asparagine 394, asparagine 421, asparagine 498, asparagine 513, asparagine 536, and asparagine 551. A glycan (N-linked (GlcNAc...) asparagine) is linked at asparagine 733. Residues isoleucine 956–leucine 976 form a helical membrane-spanning segment. The Cytoplasmic segment spans residues cysteine 977–arginine 1072. The short motif at tyrosine 995–leucine 998 is the Endocytosis signal element. Residues lysine 1045–arginine 1072 are disordered. The segment covering valine 1053 to arginine 1072 has biased composition (polar residues).

As to quaternary structure, homodimer. Interacts with AP2M1; required for clathrin-mediated endocytosis. Post-translationally, N-glycosylated. O-glycosylated. In terms of processing, shedding of the extracellular domain and intramembrane cleavage produce several proteolytic products. The intramembrane cleavage releases a soluble cytoplasmic polypeptide that translocates to the nucleolus. As to expression, detected in adult brain cortex and fetal frontal lobe (at protein level). Highly expressed in brain cortex, putamen, amygdala, hippocampus and cerebellum.

It is found in the cell membrane. The protein localises to the early endosome membrane. In terms of biological role, involved in neuronal migration during development of the cerebral neocortex. May function in a cell autonomous and a non-cell autonomous manner and play a role in appropriate adhesion between migrating neurons and radial glial fibers. May also regulate growth and differentiation of dendrites. The polypeptide is Dyslexia-associated protein KIAA0319 (KIAA0319) (Homo sapiens (Human)).